We begin with the raw amino-acid sequence, 207 residues long: Superoxide dismutase [Fe] (207 aa).

Fe cation is bound by residues His28, His76, Asp160, and His164.

Belongs to the iron/manganese superoxide dismutase family. As to quaternary structure, homotetramer. It depends on Fe cation as a cofactor.

The protein resides in the secreted. The enzyme catalyses 2 superoxide + 2 H(+) = H2O2 + O2. Destroys superoxide anion radicals which are normally produced within the cells and which are toxic to biological systems. The chain is Superoxide dismutase [Fe] (sodB) from Mycobacterium tuberculosis (strain CDC 1551 / Oshkosh).